The sequence spans 480 residues: Cysteine--tRNA ligase (480 aa).

Cysteine 29 is a binding site for Zn(2+). The short motif at 31–41 is the 'HIGH' region element; the sequence is PTVYADPHLGH. Zn(2+) is bound by residues cysteine 220, histidine 245, and glutamate 249. The short motif at 276-280 is the 'KMSKS' region element; the sequence is KMAKS. Lysine 279 lines the ATP pocket.

It belongs to the class-I aminoacyl-tRNA synthetase family. In terms of assembly, monomer. Zn(2+) serves as cofactor.

The protein localises to the cytoplasm. It catalyses the reaction tRNA(Cys) + L-cysteine + ATP = L-cysteinyl-tRNA(Cys) + AMP + diphosphate. This Thermus thermophilus (strain ATCC 27634 / DSM 579 / HB8) protein is Cysteine--tRNA ligase.